An 89-amino-acid polypeptide reads, in one-letter code: Small ribosomal subunit protein uS15 (89 aa).

The protein belongs to the universal ribosomal protein uS15 family. As to quaternary structure, part of the 30S ribosomal subunit. Forms a bridge to the 50S subunit in the 70S ribosome, contacting the 23S rRNA.

One of the primary rRNA binding proteins, it binds directly to 16S rRNA where it helps nucleate assembly of the platform of the 30S subunit by binding and bridging several RNA helices of the 16S rRNA. Functionally, forms an intersubunit bridge (bridge B4) with the 23S rRNA of the 50S subunit in the ribosome. The protein is Small ribosomal subunit protein uS15 of Staphylococcus epidermidis (strain ATCC 12228 / FDA PCI 1200).